The primary structure comprises 384 residues: Galactokinase (384 aa).

A substrate-binding site is contributed by 34–37 (EHTD). 123–129 (SSGLSSS) serves as a coordination point for ATP. Positions 129 and 161 each coordinate Mg(2+). Asp-173 acts as the Proton acceptor in catalysis. Residue Tyr-222 participates in substrate binding.

It belongs to the GHMP kinase family. GalK subfamily.

It localises to the cytoplasm. The enzyme catalyses alpha-D-galactose + ATP = alpha-D-galactose 1-phosphate + ADP + H(+). Its pathway is carbohydrate metabolism; galactose metabolism. Catalyzes the transfer of the gamma-phosphate of ATP to D-galactose to form alpha-D-galactose-1-phosphate (Gal-1-P). The sequence is that of Galactokinase from Glaesserella parasuis serovar 5 (strain SH0165) (Haemophilus parasuis).